Reading from the N-terminus, the 401-residue chain is All trans-polyprenyl-diphosphate synthase PDSS2 (401 aa).

This sequence belongs to the FPP/GGPP synthase family. Heterotetramer composed of 2 PDSS1/DPS1 and 2 PDSS2/DLP1 subunits.

It localises to the mitochondrion. The enzyme catalyses 7 isopentenyl diphosphate + (2E,6E)-farnesyl diphosphate = all-trans-decaprenyl diphosphate + 7 diphosphate. It catalyses the reaction 6 isopentenyl diphosphate + (2E,6E)-farnesyl diphosphate = all-trans-nonaprenyl diphosphate + 6 diphosphate. Its pathway is cofactor biosynthesis; ubiquinone biosynthesis. Functionally, heterotetrameric enzyme that catalyzes the condensation of farnesyl diphosphate (FPP), which acts as a primer, and isopentenyl diphosphate (IPP) to produce prenyl diphosphates of varying chain lengths and participates in the determination of the side chain of ubiquinone. Supplies nona and decaprenyl diphosphate, the precursors for the side chain of the isoprenoid quinones ubiquinone-9 (Q9) and ubiquinone-10 (Q10) respectively. The enzyme adds isopentenyl diphosphate molecules sequentially to farnesyl diphosphate with trans stereochemistry. May play a role during cerebellar development. May regulate mitochondrial respiratory chain function. This is All trans-polyprenyl-diphosphate synthase PDSS2 from Rattus norvegicus (Rat).